Reading from the N-terminus, the 685-residue chain is Serine/threonine-protein kinase PLK2 (685 aa).

Residues 24–71 (KGCGADSKKKRPPQPPEESQPPQSQAQVPPAAAHHHHHHSHSGPEISR) form a disordered region. Residues 43 to 55 (QPPQSQAQVPPAA) show a composition bias toward low complexity. The region spanning 82–334 (YCRGKVLGKG…LDDIIRHDFF (253 aa)) is the Protein kinase domain. ATP is bound by residues 88-96 (LGKGGFAKC) and lysine 111. Aspartate 205 serves as the catalytic Proton acceptor. Phosphothreonine is present on threonine 239. Residues 406–433 (SITQQPSKHRTDEELQPPTTTVARSGTP) form a disordered region. POLO box domains follow at residues 503 to 581 (WVTK…YMEE) and 601 to 685 (YLLQ…QRCN).

The protein belongs to the protein kinase superfamily. Ser/Thr protein kinase family. CDC5/Polo subfamily. Interacts with NSF; causing NSF dissociation from GRIA2. Interacts with CIB1. Catalytic activity is enhanced by phosphorylation of Thr-239.

It localises to the cytoplasm. It is found in the cytoskeleton. The protein localises to the microtubule organizing center. Its subcellular location is the centrosome. The protein resides in the centriole. It localises to the cell projection. It is found in the dendrite. The enzyme catalyses L-seryl-[protein] + ATP = O-phospho-L-seryl-[protein] + ADP + H(+). It carries out the reaction L-threonyl-[protein] + ATP = O-phospho-L-threonyl-[protein] + ADP + H(+). With respect to regulation, activated by phosphorylation of Thr-239. Once activated, activity is stimulated by binding target proteins. Functionally, tumor suppressor serine/threonine-protein kinase involved in synaptic plasticity, centriole duplication and G1/S phase transition. Polo-like kinases act by binding and phosphorylating proteins that are already phosphorylated on a specific motif recognized by the POLO box domains. Phosphorylates CPAP, NPM1, RAPGEF2, RASGRF1, SNCA, SIPA1L1 and SYNGAP1. Plays a key role in synaptic plasticity and memory by regulating the Ras and Rap protein signaling: required for overactivity-dependent spine remodeling by phosphorylating the Ras activator RASGRF1 and the Rap inhibitor SIPA1L1 leading to their degradation by the proteasome. Conversely, phosphorylates the Rap activator RAPGEF2 and the Ras inhibitor SYNGAP1, promoting their activity. Also regulates synaptic plasticity independently of kinase activity, via its interaction with NSF that disrupts the interaction between NSF and the GRIA2 subunit of AMPARs, leading to a rapid rundown of AMPAR-mediated current that occludes long term depression. Required for procentriole formation and centriole duplication by phosphorylating CPAP and NPM1, respectively. Its induction by p53/TP53 suggests that it may participate in the mitotic checkpoint following stress. The sequence is that of Serine/threonine-protein kinase PLK2 (PLK2) from Pongo abelii (Sumatran orangutan).